A 253-amino-acid polypeptide reads, in one-letter code: Core protein VP8 (253 aa).

Residues 1 to 31 (MNDLLLENLFGEKALCAQVTRDQLLEIIAAG) constitute a propeptide that is removed on maturation.

It belongs to the chordopoxvirinae VP8 family. In terms of processing, undergoes morphogenesis-associated proteolysis which cleaves the 28 kDa to a 25-kDa product. Proteolytic cleavage of major core proteins P4a (A10L), P4b (A3L), and VP8 (L4R), which occurs at a late stage of core formation, is required for production of infectious mature virions (MV).

The protein localises to the virion. In terms of biological role, major core structural protein. In Vertebrata (FPV), this protein is Core protein VP8.